Reading from the N-terminus, the 680-residue chain is DNA ligase (680 aa).

NAD(+) contacts are provided by residues 44–48, 94–95, and glutamate 124; these read DYIYD and SL. The N6-AMP-lysine intermediate role is filled by lysine 126. NAD(+) contacts are provided by arginine 147, glutamate 181, lysine 297, and lysine 321. Residues cysteine 415, cysteine 418, cysteine 433, and cysteine 438 each contribute to the Zn(2+) site. In terms of domain architecture, BRCT spans 598 to 680; sequence DENSFFYGKK…VDEQVKEDGK (83 aa).

It belongs to the NAD-dependent DNA ligase family. LigA subfamily. Requires Mg(2+) as cofactor. It depends on Mn(2+) as a cofactor.

The enzyme catalyses NAD(+) + (deoxyribonucleotide)n-3'-hydroxyl + 5'-phospho-(deoxyribonucleotide)m = (deoxyribonucleotide)n+m + AMP + beta-nicotinamide D-nucleotide.. Its function is as follows. DNA ligase that catalyzes the formation of phosphodiester linkages between 5'-phosphoryl and 3'-hydroxyl groups in double-stranded DNA using NAD as a coenzyme and as the energy source for the reaction. It is essential for DNA replication and repair of damaged DNA. In Leuconostoc mesenteroides subsp. mesenteroides (strain ATCC 8293 / DSM 20343 / BCRC 11652 / CCM 1803 / JCM 6124 / NCDO 523 / NBRC 100496 / NCIMB 8023 / NCTC 12954 / NRRL B-1118 / 37Y), this protein is DNA ligase.